Here is a 260-residue protein sequence, read N- to C-terminus: Large ribosomal subunit protein uL4 (260 aa).

It belongs to the universal ribosomal protein uL4 family. In terms of assembly, part of the 50S ribosomal subunit.

In terms of biological role, one of the primary rRNA binding proteins, this protein initially binds near the 5'-end of the 23S rRNA. It is important during the early stages of 50S assembly. It makes multiple contacts with different domains of the 23S rRNA in the assembled 50S subunit and ribosome. Functionally, forms part of the polypeptide exit tunnel. The sequence is that of Large ribosomal subunit protein uL4 from Methanopyrus kandleri (strain AV19 / DSM 6324 / JCM 9639 / NBRC 100938).